The chain runs to 549 residues: Cation/acetate symporter ActP (549 aa).

Transmembrane regions (helical) follow at residues 33-53 (WQAI…TYWA), 77-97 (LAIA…ALVF), 103-123 (GLIY…LIAE), 148-168 (ILSA…QMVG), 183-203 (IAVV…GMLA), 206-226 (WVQI…AFMV), 262-282 (ISAL…PHIL), 303-323 (GFMG…IMLV), 355-375 (LFLG…VAGL), 404-424 (VSKI…VLFE), 428-448 (IAFM…PIIL), 464-484 (GGWL…TIWV), and 493-513 (IFPY…GIWF).

It belongs to the sodium:solute symporter (SSF) (TC 2.A.21) family.

Its subcellular location is the cell inner membrane. Transports acetate. The sequence is that of Cation/acetate symporter ActP from Citrobacter koseri (strain ATCC BAA-895 / CDC 4225-83 / SGSC4696).